The chain runs to 427 residues: Peptidyl-prolyl cis-trans isomerase sig-7 (427 aa).

The PPIase cyclophilin-type domain occupies 6–161 (ETTLGDLIID…KDIRISHTIV (156 aa)). Residues 195–227 (DEKEDEDEGKTAEEIAEELQQREMAEQAQILEM) are a coiled coil. The region spanning 241–319 (NVLFVCKLNP…RRIHVDFSQS (79 aa)) is the RRM domain. Over residues 322–334 (QNYKYKPKSQQQE) the composition is skewed to polar residues. The segment at 322–427 (QNYKYKPKSQ…RSPDRRRDRR (106 aa)) is disordered. Residues 351–370 (SHQRSPSPRRRRSPSPKKDK) are compositionally biased toward basic residues. Positions 384 to 427 (SSDNHRDRDRSYRDNNRDRRDNHRDSDRDRRRHDRSPDRRRDRR) are enriched in basic and acidic residues.

The protein belongs to the cyclophilin-type PPIase family. PPIL4 subfamily. As to quaternary structure, interacts with ama-1, the catalytic subunit of the RNA polymerase II (RNA pol II) complex. Ubiquitous.

It is found in the nucleus. Its subcellular location is the nucleoplasm. It localises to the chromosome. It catalyses the reaction [protein]-peptidylproline (omega=180) = [protein]-peptidylproline (omega=0). Functionally, probable PPIase that accelerates the folding of proteins. It catalyzes the cis-trans isomerization of proline imidic peptide bonds in oligopeptides. Involved in RNA polymerase II (RNA pol II)-mediated transcription elongation, and in primary transcript splicing, including co-transcriptional trans-splicing, in association with the catalytic subunit of the RNA pol II complex ama-1. Also plays a role in the regulation of elongation-dependent phosphorylation of ama-1 to control transcription. Involved in the transcription of several genes during embryogenesis and in particular, of genes related to developmental processes such as gastrulation, and also regulates transcription in germ cells from embryogenesis to adulthood. This is Peptidyl-prolyl cis-trans isomerase sig-7 from Caenorhabditis elegans.